We begin with the raw amino-acid sequence, 709 residues long: Septu protein PtuA (709 aa).

Component of antiviral defense system Septu type II, composed of PtuA and PtuB. Expression of Septu type II in B.subtilis (strain BEST7003) confers resistance to phages SBSphiC and SpBeta. May be an ATPase. The chain is Septu protein PtuA from Bacillus mycoides (strain KBAB4) (Bacillus weihenstephanensis).